We begin with the raw amino-acid sequence, 188 residues long: ATP synthase subunit b 2 (188 aa).

The tract at residues 1–23 (MAEGHGDANGATAHTAADGGHKA) is disordered. The segment covering 8 to 18 (ANGATAHTAAD) has biased composition (low complexity). Residues 37–57 (LVSLLIAFVALYLIVSKIALP) form a helical membrane-spanning segment.

This sequence belongs to the ATPase B chain family. In terms of assembly, F-type ATPases have 2 components, F(1) - the catalytic core - and F(0) - the membrane proton channel. F(1) has five subunits: alpha(3), beta(3), gamma(1), delta(1), epsilon(1). F(0) has three main subunits: a(1), b(2) and c(10-14). The alpha and beta chains form an alternating ring which encloses part of the gamma chain. F(1) is attached to F(0) by a central stalk formed by the gamma and epsilon chains, while a peripheral stalk is formed by the delta and b chains.

Its subcellular location is the cell inner membrane. F(1)F(0) ATP synthase produces ATP from ADP in the presence of a proton or sodium gradient. F-type ATPases consist of two structural domains, F(1) containing the extramembraneous catalytic core and F(0) containing the membrane proton channel, linked together by a central stalk and a peripheral stalk. During catalysis, ATP synthesis in the catalytic domain of F(1) is coupled via a rotary mechanism of the central stalk subunits to proton translocation. Functionally, component of the F(0) channel, it forms part of the peripheral stalk, linking F(1) to F(0). The b'-subunit is a diverged and duplicated form of b found in plants and photosynthetic bacteria. In Rhodopseudomonas palustris (strain BisB18), this protein is ATP synthase subunit b 2 (atpF2).